A 67-amino-acid chain; its full sequence is Large ribosomal subunit protein uL29 (67 aa).

This sequence belongs to the universal ribosomal protein uL29 family.

The sequence is that of Large ribosomal subunit protein uL29 from Acetivibrio thermocellus (strain ATCC 27405 / DSM 1237 / JCM 9322 / NBRC 103400 / NCIMB 10682 / NRRL B-4536 / VPI 7372) (Clostridium thermocellum).